The chain runs to 292 residues: F-box/LRR-repeat protein 15 (292 aa).

Positions 12–59 (LLDLPWEDVLVTHIFCYLPLRQLVRLQRVSKQFYALIQVYLANCRTFD) constitute an F-box domain. LRR repeat units lie at residues 134-155 (HLQY…RSLA), 160-181 (GLRS…CYLS), 186-207 (KMRS…EEVA), 212-233 (ELEQ…RTVA), and 238-259 (KLQS…DPLR).

This sequence belongs to the FBXL15 family. As to quaternary structure, part of the SCF (SKP1-CUL1-F-box) E3 ubiquitin-protein ligase complex SCF(FBXL15).

Its subcellular location is the cytoplasm. The protein operates within protein modification; protein ubiquitination. Functionally, substrate recognition component of a SCF (SKP1-CUL1-F-box protein) E3 ubiquitin-protein ligase complex which mediates the ubiquitination and subsequent proteasomal degradation of target proteins. Acts as a positive regulator of the BMP signaling pathway. Required for dorsal/ventral pattern formation. This Salmo salar (Atlantic salmon) protein is F-box/LRR-repeat protein 15 (fbxl15).